The sequence spans 88 residues: Small ribosomal subunit protein bS20 (88 aa).

Belongs to the bacterial ribosomal protein bS20 family.

Binds directly to 16S ribosomal RNA. This chain is Small ribosomal subunit protein bS20, found in Clostridium novyi (strain NT).